Consider the following 1017-residue polypeptide: Fanconi-associated nuclease 1 (1017 aa).

Basic and acidic residues predominate over residues 1-10 (MMSEGKPPDK). The segment at 1-23 (MMSEGKPPDKKRPRRSLSISKNK) is disordered. Residues 11-23 (KRPRRSLSISKNK) show a composition bias toward basic residues. The D-box signature appears at 14-22 (RRSLSISKN). A UBZ4-type zinc finger spans residues 41–69 (KLACPVCSKMVPRYDLNRHLDEMCANNDF). 4 residues coordinate Zn(2+): cysteine 44, cysteine 47, histidine 59, and cysteine 64. 2 disordered regions span residues 95–121 (EDVT…KREV) and 170–189 (IDKD…STVV). Polar residues predominate over residues 179–189 (SSPQSSKSTVV). Serine 180 carries the phosphoserine modification. The KEN box signature appears at 212-214 (KEN). Residues 671 to 696 (SRFVEILQRLHMYEEAVRELESLLSQ) adopt a coiled-coil conformation. Glutamate 834, aspartate 960, glutamate 975, and valine 976 together coordinate Mn(2+). The VRR-NUC domain occupies 895–1007 (EESLRAWVAA…GAEVEVCHVV (113 aa)).

This sequence belongs to the FAN1 family. Interacts with FANCD2 (when monoubiquitinated). Interacts with FANCI, MLH1, MLH3 and PMS2. Mn(2+) serves as cofactor. It depends on Mg(2+) as a cofactor. Ubiquitinated and degraded during mitotic exit by the APC/C-Cdh1 complex.

Its subcellular location is the nucleus. The enzyme catalyses Hydrolytically removes 5'-nucleotides successively from the 3'-hydroxy termini of 3'-hydroxy-terminated oligonucleotides.. Functionally, nuclease required for the repair of DNA interstrand cross-links (ICL) recruited at sites of DNA damage by monoubiquitinated FANCD2. Specifically involved in repair of ICL-induced DNA breaks by being required for efficient homologous recombination, probably in the resolution of homologous recombination intermediates. Not involved in DNA double-strand breaks resection. Acts as a 5'-3' exonuclease that anchors at a cut end of DNA and cleaves DNA successively at every third nucleotide, allowing to excise an ICL from one strand through flanking incisions. Probably keeps excising with 3'-flap annealing until it reaches and unhooks the ICL. Acts at sites that have a 5'-terminal phosphate anchor at a nick or a 1- or 2-nucleotide flap and is augmented by a 3' flap. Also has endonuclease activity toward 5'-flaps. The polypeptide is Fanconi-associated nuclease 1 (Homo sapiens (Human)).